The sequence spans 184 residues: CASP-like protein 1U1 (184 aa).

Over 1–30 the chain is Cytoplasmic; that stretch reads MSSTGTTLSASEGDKGFRNGAAPAKSKSHS. The helical transmembrane segment at 31–51 threads the bilayer; the sequence is TIALLRLLAFAATLSAFVTMI. At 52-76 the chain is on the extracellular side; sequence TNKQKITIGPFTRWSKWHYSDAFMW. A helical membrane pass occupies residues 77 to 97; that stretch reads FVVANCIAFIYLLFAAILGLI. The Cytoplasmic portion of the chain corresponds to 98–111; that stretch reads SHSPMLVKHLVILD. A helical transmembrane segment spans residues 112 to 132; it reads LIVSYMLFSAASAATAVAYIG. Residues 133-154 lie on the Extracellular side of the membrane; that stretch reads KNGISQPGWTAICGVFERYCHH. Residues 155-175 form a helical membrane-spanning segment; that stretch reads VAGALVACFLGWLFLTIAVFL. Residues 176 to 184 are Cytoplasmic-facing; that stretch reads GMRRSPAAV.

Belongs to the Casparian strip membrane proteins (CASP) family. In terms of assembly, homodimer and heterodimers.

It localises to the cell membrane. The polypeptide is CASP-like protein 1U1 (Marchantia polymorpha (Common liverwort)).